Consider the following 306-residue polypeptide: Ribonuclease Z (306 aa).

The Zn(2+) site is built by histidine 61, histidine 63, aspartate 65, histidine 66, histidine 137, aspartate 207, and histidine 263. Aspartate 65 acts as the Proton acceptor in catalysis.

This sequence belongs to the RNase Z family. In terms of assembly, homodimer. It depends on Zn(2+) as a cofactor.

It carries out the reaction Endonucleolytic cleavage of RNA, removing extra 3' nucleotides from tRNA precursor, generating 3' termini of tRNAs. A 3'-hydroxy group is left at the tRNA terminus and a 5'-phosphoryl group is left at the trailer molecule.. Functionally, zinc phosphodiesterase, which displays some tRNA 3'-processing endonuclease activity. Probably involved in tRNA maturation, by removing a 3'-trailer from precursor tRNA. This chain is Ribonuclease Z, found in Thermococcus sibiricus (strain DSM 12597 / MM 739).